The chain runs to 1001 residues: Serine/threonine-protein kinase TAO1-B (1001 aa).

A Protein kinase domain is found at 28-281 (FSDLREIGHG…SDELLKHMFV (254 aa)). Residues 34 to 42 (IGHGSFGAV) and lysine 57 each bind ATP. Aspartate 151 functions as the Proton acceptor in the catalytic mechanism. 2 disordered regions span residues 324 to 435 (PAVE…YRNR) and 567 to 586 (KEEL…EWLS). The segment covering 350–370 (SNQSIPSMSISASSQSSSVNS) has biased composition (low complexity). Basic and acidic residues-rich tracts occupy residues 375 to 388 (SDDK…EGDH) and 577 to 586 (PKKEKQEWLS). Coiled-coil stretches lie at residues 458–651 (SELR…EHAM) and 754–877 (KAVL…EIEA). The interval 911-1001 (SHNPTGGPGP…ISNGSHMSYT (91 aa)) is disordered. Positions 921-930 (HWGHPMAGPP) are enriched in low complexity. 2 stretches are compositionally biased toward polar residues: residues 949–967 (GSVQ…NSPQ) and 975–1001 (GGRT…MSYT).

Belongs to the protein kinase superfamily. STE Ser/Thr protein kinase family. STE20 subfamily.

The protein localises to the cytoplasm. It carries out the reaction L-seryl-[protein] + ATP = O-phospho-L-seryl-[protein] + ADP + H(+). The enzyme catalyses L-threonyl-[protein] + ATP = O-phospho-L-threonyl-[protein] + ADP + H(+). Functionally, serine/threonine-protein kinase involved in various processes such as p38/mapk14 stress-activated MAPK cascade, DNA damage response and regulation of cytoskeleton stability. Acts as an activator of the p38/MAPK14 stress-activated MAPK cascade by mediating phosphorylation and subsequent activation of upstream MAP kinase kinases. In response to DNA damage, involved in the G2/M transition DNA damage checkpoint by activating the p38/MAPK14 stress-activated MAPK cascade. The protein is Serine/threonine-protein kinase TAO1-B (taok1-b) of Xenopus laevis (African clawed frog).